A 362-amino-acid chain; its full sequence is MHVVLAGGGTAGHIEPALALADALRRQDPTVGITALGTERGLETRLVPERGYELALIPAVPLPRKPTPELITVPGRLRGTIKAAEQILERTKADCVVGFGGYVALPGYLAAKRLGVPIVIHEANARPGLANKIGSRYAARVARLHAGQQRARRPLHRHPVRRSIATLDRAAVRPEARARFGLDPNLPTLLVSGGSQGARRLNEVVQQVAPWLQQAGIQILHAVGPKNELPQVQQMPGMPPYIPVSYLDRMDLAYAAADMMLCRAGAMTVAELSAVGLPAAYVPLPIGNGEQRLNAQPVVKAGGGLLVDDAELTPEWVQQTVLPVLADPHRLYEMSRAAGEFGRRDADELLVGMVYEAIASRR.

Residues 10–12 (TAG), asparagine 124, arginine 161, serine 195, and glutamine 291 each bind UDP-N-acetyl-alpha-D-glucosamine.

Belongs to the glycosyltransferase 28 family. MurG subfamily.

The protein resides in the cell membrane. It catalyses the reaction di-trans,octa-cis-undecaprenyl diphospho-N-acetyl-alpha-D-muramoyl-L-alanyl-D-glutamyl-meso-2,6-diaminopimeloyl-D-alanyl-D-alanine + UDP-N-acetyl-alpha-D-glucosamine = di-trans,octa-cis-undecaprenyl diphospho-[N-acetyl-alpha-D-glucosaminyl-(1-&gt;4)]-N-acetyl-alpha-D-muramoyl-L-alanyl-D-glutamyl-meso-2,6-diaminopimeloyl-D-alanyl-D-alanine + UDP + H(+). The protein operates within cell wall biogenesis; peptidoglycan biosynthesis. Its function is as follows. Cell wall formation. Catalyzes the transfer of a GlcNAc subunit on undecaprenyl-pyrophosphoryl-MurNAc-pentapeptide (lipid intermediate I) to form undecaprenyl-pyrophosphoryl-MurNAc-(pentapeptide)GlcNAc (lipid intermediate II). This is UDP-N-acetylglucosamine--N-acetylmuramyl-(pentapeptide) pyrophosphoryl-undecaprenol N-acetylglucosamine transferase from Streptomyces collinus.